A 243-amino-acid polypeptide reads, in one-letter code: DNA repair protein RecO (243 aa).

This sequence belongs to the RecO family.

Its function is as follows. Involved in DNA repair and RecF pathway recombination. This Xylella fastidiosa (strain M12) protein is DNA repair protein RecO.